We begin with the raw amino-acid sequence, 595 residues long: NADH-quinone oxidoreductase subunit C/D (595 aa).

The segment at 1–186 is NADH dehydrogenase I subunit C; it reads MAETDIAMPE…TPYMQNQAKQ (186 aa). Residues 210–595 form an NADH dehydrogenase I subunit D region; that stretch reads DFMFLNLGPN…IDVVMADVDR (386 aa).

It in the N-terminal section; belongs to the complex I 30 kDa subunit family. The protein in the C-terminal section; belongs to the complex I 49 kDa subunit family. In terms of assembly, NDH-1 is composed of 13 different subunits. Subunits NuoB, CD, E, F, and G constitute the peripheral sector of the complex.

It localises to the cell inner membrane. The catalysed reaction is a quinone + NADH + 5 H(+)(in) = a quinol + NAD(+) + 4 H(+)(out). Its function is as follows. NDH-1 shuttles electrons from NADH, via FMN and iron-sulfur (Fe-S) centers, to quinones in the respiratory chain. The immediate electron acceptor for the enzyme in this species is believed to be ubiquinone. Couples the redox reaction to proton translocation (for every two electrons transferred, four hydrogen ions are translocated across the cytoplasmic membrane), and thus conserves the redox energy in a proton gradient. In Acinetobacter baylyi (strain ATCC 33305 / BD413 / ADP1), this protein is NADH-quinone oxidoreductase subunit C/D.